The primary structure comprises 293 residues: ATP synthase subunit a (293 aa).

6 helical membrane-spanning segments follow: residues 40–60 (DSLF…WLAA), 97–117 (LFVA…NALD), 151–171 (DLNV…YYGI), 188–208 (FHAH…LNLI), 225–245 (MFAG…WTGF), and 264–284 (AIFH…LTLV).

The protein belongs to the ATPase A chain family. F-type ATPases have 2 components, CF(1) - the catalytic core - and CF(0) - the membrane proton channel. CF(1) has five subunits: alpha(3), beta(3), gamma(1), delta(1), epsilon(1). CF(0) has three main subunits: a(1), b(2) and c(9-12). The alpha and beta chains form an alternating ring which encloses part of the gamma chain. CF(1) is attached to CF(0) by a central stalk formed by the gamma and epsilon chains, while a peripheral stalk is formed by the delta and b chains.

It localises to the cell inner membrane. Key component of the proton channel; it plays a direct role in the translocation of protons across the membrane. The sequence is that of ATP synthase subunit a from Bordetella bronchiseptica (strain ATCC BAA-588 / NCTC 13252 / RB50) (Alcaligenes bronchisepticus).